Here is a 760-residue protein sequence, read N- to C-terminus: Cellulose synthase-like protein G1 (760 aa).

Helical transmembrane passes span 28 to 48 (IYAI…VHSL) and 54 to 74 (TLIT…WATT). Catalysis depends on residues D142 and D447. The next 5 membrane-spanning stretches (helical) occupy residues 530 to 550 (IPLT…VSVF), 558 to 578 (FWLY…DFLL), 593 to 613 (LMIK…LKTL), 656 to 676 (VAIV…FCGG), and 680 to 700 (LELM…GAMV).

Belongs to the glycosyltransferase 2 family. Plant cellulose synthase-like G subfamily. In terms of tissue distribution, expressed in young seedlings, primarily in the vascular tissue.

The protein localises to the golgi apparatus membrane. Its function is as follows. Thought to be a Golgi-localized beta-glycan synthase that polymerize the backbones of noncellulosic polysaccharides (hemicelluloses) of plant cell wall. In Arabidopsis thaliana (Mouse-ear cress), this protein is Cellulose synthase-like protein G1 (CSLG1).